The sequence spans 377 residues: MGIAGTFIFMIVIGAAIGAVTNHLAIQMLFRPYKAYYLFGKRVPFTPGLIPRRRDELAKQMGLMVVNHLLTPEGIKKRLVSDAAKTQALRVGEQLIQKLSLSEVTVKEALEKAGMKRPEKAADAWISSWTDDKLHELFRQYGDQSLKELVPIEVQEKLEEKIPMISGYILSRSVRYFESDEGKIRLGNMIDDFLKERGMLGSMVQLFLGNSSLADRVLPELLKFLRNEETNKLLSDLLKNEWGKLREYTFNEADEKWNAKALIFSLKRRVLQAFSTAPFFNNTIGTLTVRYESELTQQMLPALLDKLLEGISSNLESVLKRLRLEEIVKEQVDQFPVERLEEMVLSISKKEFKMITYLGGLLGGIIGAIQALFVILF.

2 helical membrane passes run 1 to 21 (MGIA…GAVT) and 357 to 377 (YLGG…VILF).

Belongs to the UPF0754 family.

The protein localises to the cell membrane. This is UPF0754 membrane protein YheB (yheB) from Bacillus subtilis (strain 168).